Consider the following 288-residue polypeptide: CBY1-interacting BAR domain-containing protein 2 (288 aa).

Positions Ser6–Glu217 are BAR-like. Disordered stretches follow at residues Gln133–Ser157 and Thr256–Gln288. The segment covering Asp138 to Ser157 has biased composition (polar residues). Residues Ser266–Val276 show a composition bias toward acidic residues.

It belongs to the CIBAR family. Homodimer (via BAR-like domain). Heterodimer (via BAR-like domain) with FAM92A. Interacts with CBY1.

It is found in the cytoplasm. The protein localises to the cytoskeleton. Its subcellular location is the microtubule organizing center. The protein resides in the centrosome. It localises to the centriole. It is found in the cilium basal body. In terms of biological role, may play a role in ciliogenesis. In cooperation with CBY1 may facilitate ciliogenesis likely by the recruitment and fusion of endosomal vesicles at distal appendages during early stages of ciliogenesis. The sequence is that of CBY1-interacting BAR domain-containing protein 2 (CIBAR2) from Bos taurus (Bovine).